Consider the following 163-residue polypeptide: Retinoic acid receptor responder protein 2 (163 aa).

Residues 1–20 (MRRLLIPLALWLGAVGVGVA) form the signal peptide. 3 disulfide bridges follow: Cys-77-Cys-87, Cys-98-Cys-117, and Cys-101-Cys-135. The propeptide occupies 158–163 (KALPRS).

In terms of processing, secreted in an inactive precursor form, prochemerin, which is proteolytically processed by a variety of extracellular proteases to generate forms with differing levels of bioactivity. For example, the removal of six amino acids results in chemerin-157, which exhibits the highest activity, while removal of seven amino acids results in chemerin-156 which has slightly less activity. Some proteases are able to cleave at more than one site and chemerin forms may be sequentially processed by different enzymes to modulate activity levels. The coordinated expression and activity of chemerin-modifying enzymes is essential for regulating its bioactivation, inactivation and, consequently, biological function. Cathepsin G cleaves seven C-terminal amino acids from prochemerin (chemerin-156), elastase is able to cleave six (chemerin-157), eight (chemerin-155) or eleven (chemerin-152), plasmin cleaves five amino acids (chemerin-158), and tryptase cleaves five (chemerin-158) or eight (chemerin-155). Multiple cleavages might be required to fully activate chemerin, with an initial tryptase cleavage resulting in chemerin with low activity (chemerin-158), and a second cleavage by carboxypeptidase N or B producing highly active chemerin (chemerin-157). In terms of tissue distribution, expressed at the highest levels in placenta, liver, and white adipose tissue (WAT), and to a lesser extent in many other tissues such as lung, brown adipose tissue, heart, ovary, kidney, skeletal muscle and pancreas. Within WAT, expression is enriched in adipocytes as compared to the stromal vascular fraction. Expression and secretion increases dramatically with adipogenesis. Highly expressed in skin (basal and suprabasal layers of the epidermis, hair follicles and endothelial cells). Expression is elevated in numerous metabolic and inflammatory diseases including psoriasis, obesity, type 2 diabetes, metabolic syndrome and cardiovascular disease.

The protein resides in the secreted. Its function is as follows. Adipocyte-secreted protein (adipokine) that regulates adipogenesis, metabolism and inflammation through activation of the chemokine-like receptor 1 (CMKLR1). Also acts as a ligand for CMKLR2. Can also bind to C-C chemokine receptor-like 2 (CCRL2), but with a lower affinity than it does to CMKLR1 or CMKLR2. Positively regulates adipocyte differentiation, modulates the expression of adipocyte genes involved in lipid and glucose metabolism and might play a role in angiogenesis, a process essential for the expansion of white adipose tissue. Also acts as a pro-inflammatory adipokine, causing an increase in secretion of pro-inflammatory and prodiabetic adipokines, which further impair adipose tissue metabolic function and have negative systemic effects including impaired insulin sensitivity, altered glucose and lipid metabolism, and a decrease in vascular function in other tissues. Can have both pro- and anti-inflammatory properties depending on the modality of enzymatic cleavage by different classes of proteases. Acts as a chemotactic factor for leukocyte populations expressing CMKLR1, particularly immature plasmacytoid dendritic cells, but also immature myeloid DCs, macrophages and natural killer cells. Exerts an anti-inflammatory role by preventing TNF/TNFA-induced VCAM1 expression and monocytes adhesion in vascular endothelial cells. The effect is mediated via inhibiting activation of NF-kappa-B and CRK/p38 through stimulation of AKT1/NOS3 signaling and nitric oxide production. Its dual role in inflammation and metabolism might provide a link between chronic inflammation and obesity, as well as obesity-related disorders such as type 2 diabetes and cardiovascular disease. Exhibits an antimicrobial function in the skin. This is Retinoic acid receptor responder protein 2 (RARRES2) from Homo sapiens (Human).